Here is a 699-residue protein sequence, read N- to C-terminus: 1,4-alpha-glucan-branching enzyme (699 aa).

Substrate-binding positions include Asn-59 to Glu-60 and Trp-88 to Pro-90. Trp-104 contacts (1,4-alpha-D-glucosyl)n. Position 115–118 (Asp-115–Lys-118) interacts with substrate. Lys-140 lines the (1,4-alpha-D-glucosyl)n pocket. Residue Tyr-170 is modified to Phosphotyrosine. Residue Glu-330 to Arg-333 participates in substrate binding. Asp-354 acts as the Nucleophile in catalysis. Residue Glu-409 is the Proton donor of the active site.

The protein belongs to the glycosyl hydrolase 13 family. GlgB subfamily. In terms of assembly, monomer.

It catalyses the reaction Transfers a segment of a (1-&gt;4)-alpha-D-glucan chain to a primary hydroxy group in a similar glucan chain.. It participates in glycan biosynthesis; glycogen biosynthesis. Glycogen-branching enzyme participates in the glycogen biosynthetic process along with glycogenin and glycogen synthase. Generates alpha-1,6-glucosidic branches from alpha-1,4-linked glucose chains, to increase solubility of the glycogen polymer. This chain is 1,4-alpha-glucan-branching enzyme (GBE1), found in Equus caballus (Horse).